A 685-amino-acid polypeptide reads, in one-letter code: T-box transcription factor TBX2 (685 aa).

A DNA-binding region (T-box) is located at residues 104-277 (LWDQFHKLGT…NNPFAKGFRD (174 aa)). Disordered regions lie at residues 270-433 (PFAK…CGSL) and 606-660 (NLLT…SINE). 4 stretches are compositionally biased toward basic and acidic residues: residues 296-308 (MYEEQCKADRDGA), 340-361 (SNREEKFGADSDQELDRREVRT), 378-403 (RLEDRGKDKNTPEKKSESPESRKDGG), and 410-428 (SLEKDKGESRRKEDSKSDP). Residues 606-617 (NLLTTGLSASLN) are compositionally biased toward polar residues. The segment covering 618 to 633 (PGSESSKPGSSRESSP) has biased composition (low complexity). Residues 652-676 (ASMKDSINELQNIQRLVSGLESQRE) are a coiled coil.

In terms of assembly, binds DNA as a monomer.

The protein resides in the nucleus. Functionally, transcription factor which acts as a transcriptional repressor. May also function as a transcriptional activator. Binds to the palindromic T site 5'-TTCACACCTAGGTGTGAA-3' DNA sequence, or a half-site, which are present in the regulatory region of several genes. The sequence is that of T-box transcription factor TBX2 (tbx2) from Xenopus tropicalis (Western clawed frog).